The sequence spans 160 residues: Cyclic pyranopterin monophosphate synthase (160 aa).

Residues 75-77 and 116-117 contribute to the substrate site; these read MCH and ME. Asp131 is a catalytic residue.

The protein belongs to the MoaC family. As to quaternary structure, homohexamer; trimer of dimers.

It catalyses the reaction (8S)-3',8-cyclo-7,8-dihydroguanosine 5'-triphosphate = cyclic pyranopterin phosphate + diphosphate. Its pathway is cofactor biosynthesis; molybdopterin biosynthesis. In terms of biological role, catalyzes the conversion of (8S)-3',8-cyclo-7,8-dihydroguanosine 5'-triphosphate to cyclic pyranopterin monophosphate (cPMP). The protein is Cyclic pyranopterin monophosphate synthase of Staphylococcus haemolyticus (strain JCSC1435).